Reading from the N-terminus, the 776-residue chain is Transcriptional regulator QRICH1 (776 aa).

Residue Met1 is modified to N-acetylmethionine. The CARD domain maps to 6-48 (ENTISFEEYIRVKARSVPQHRMKEFLDSLASKGPEALQEFQQT). Disordered regions lie at residues 139-164 (IQGQAPQSAAPSIQTPSLQSPSPSQL) and 218-240 (ALSPPPSQQGSPREGERRVGTAS). Position 345 is a phosphoserine (Ser345). Residues Lys353 and Lys358 each participate in a glycyl lysine isopeptide (Lys-Gly) (interchain with G-Cter in SUMO2) cross-link. Positions 419–429 (QQQPQQQTPQE) are enriched in low complexity. Residues 419–441 (QQQPQQQTPQEQTPPPQQQQQQL) form a disordered region. Ser464 is subject to Phosphoserine.

The protein localises to the nucleus. The protein resides in the cytoplasm. Its subcellular location is the cell membrane. In terms of biological role, transcriptional regulator that acts as a mediator of the integrated stress response (ISR) through transcriptional control of protein homeostasis under conditions of ER stress. Controls the outcome of the unfolded protein response (UPR) which is an ER-stress response pathway. ER stress induces QRICH1 translation by a ribosome translation re-initiation mechanism in response to EIF2S1/eIF-2-alpha phosphorylation, and stress-induced QRICH1 regulates a transcriptional program associated with protein translation, protein secretion-mediated proteotoxicity and cell death during the terminal UPR. May cooperate with ATF4 transcription factor signaling to regulate ER homeostasis which is critical for cell viability. Up-regulates CASP3/caspase-3 activity in epithelial cells under ER stress. Central regulator of proteotoxicity associated with ER stress-mediated inflammatory diseases in the intestines and liver. Involved in chondrocyte hypertrophy, a process required for normal longitudinal bone growth. The polypeptide is Transcriptional regulator QRICH1 (Homo sapiens (Human)).